The primary structure comprises 127 residues: Small ribosomal subunit protein eS8 (127 aa).

Belongs to the eukaryotic ribosomal protein eS8 family. In terms of assembly, part of the 30S ribosomal subunit.

This is Small ribosomal subunit protein eS8 from Pyrococcus furiosus (strain ATCC 43587 / DSM 3638 / JCM 8422 / Vc1).